A 313-amino-acid polypeptide reads, in one-letter code: GTP cyclohydrolase 1 (313 aa).

A compositionally biased stretch (basic and acidic residues) spans 1–10 (MAQETTRDGS). The interval 1 to 120 (MAQETTRDGS…SRGTRERLEE (120 aa)) is disordered. Residues 11–20 (DSPSGSVSPP) show a composition bias toward low complexity. A compositionally biased stretch (basic residues) spans 29-39 (KDKKSSKKRAH). The span at 40–64 (SSGERRSSVSKPARDPSDKPEESPS) shows a compositional bias: basic and acidic residues. Positions 72 to 102 (TSSTAAAAVPSTITEEVSPSTSVTRSPSPVI) are enriched in low complexity. Zn(2+) is bound by residues C202, H205, and C273.

This sequence belongs to the GTP cyclohydrolase I family. In terms of assembly, toroid-shaped homodecamer, composed of two pentamers of five dimers.

It catalyses the reaction GTP + H2O = 7,8-dihydroneopterin 3'-triphosphate + formate + H(+). The protein operates within cofactor biosynthesis; 7,8-dihydroneopterin triphosphate biosynthesis; 7,8-dihydroneopterin triphosphate from GTP: step 1/1. GTP shows a positive allosteric effect, and tetrahydrobiopterin inhibits the enzyme activity. Functionally, GTP cyclohydrolase 1 is the first enzyme in the biosynthetic pathway leading to folic acid. The polypeptide is GTP cyclohydrolase 1 (gch-1) (Neurospora crassa (strain ATCC 24698 / 74-OR23-1A / CBS 708.71 / DSM 1257 / FGSC 987)).